The sequence spans 606 residues: Lysosomal cobalamin transporter ABCD4 (606 aa).

The ABC transmembrane type-1 domain occupies 39 to 332 (NALMFLTLLC…CFTQLIDLST (294 aa)). The next 5 membrane-spanning stretches (helical) occupy residues 43–63 (FLTL…VGLI), 76–96 (LEGF…NSTL), 190–210 (IFGY…PIVM), 279–299 (YLGS…GVYG), and 314–334 (AFVC…STTL). Positions 389–603 (LERVSISAPS…GGGRWELMRI (215 aa)) constitute an ABC transporter domain. 421–428 (GNTGTGKT) contacts ATP.

Belongs to the ABC transporter superfamily. ABCD family. Peroxisomal fatty acyl CoA transporter (TC 3.A.1.203) subfamily. Homodimer or heterodimer. Interacts with LMBRD1; this interaction induces the translocation of ABCD4 from the ER to the lysosome membrane. Interacts with LMBRD1 and MMACHC; this interaction ensures the transport of cobalamin from the lysosome to the cytosol. As to expression, ubiquitous.

It localises to the endoplasmic reticulum membrane. It is found in the lysosome membrane. The catalysed reaction is an R-cob(III)alamin(out) + ATP + H2O = an R-cob(III)alamin(in) + ADP + phosphate + H(+). Functionally, lysosomal membrane protein that transports cobalamin (Vitamin B12) from the lysosomal lumen to the cytosol in an ATP-dependent manner. Targeted by LMBRD1 lysosomal chaperone from the endoplasmic reticulum to the lysosomal membrane. Then forms a complex with lysosomal chaperone LMBRD1 and cytosolic MMACHC to transport cobalamin across the lysosomal membrane. The protein is Lysosomal cobalamin transporter ABCD4 of Homo sapiens (Human).